We begin with the raw amino-acid sequence, 462 residues long: Ribosomal protein uS12 methylthiotransferase RimO (462 aa).

Positions 10–125 constitute an MTTase N-terminal domain; it reads PRIGMVSLGC…VLDAVHRNLP (116 aa). [4Fe-4S] cluster-binding residues include cysteine 19, cysteine 55, cysteine 84, cysteine 160, cysteine 164, and cysteine 167. Positions 146-388 constitute a Radical SAM core domain; it reads LTPRHYAYLK…AVAEALSSAK (243 aa). Residues 390–462 form the TRAM domain; that stretch reads QRRVGATMQV…RGHDLLAQPI (73 aa).

Belongs to the methylthiotransferase family. RimO subfamily. Requires [4Fe-4S] cluster as cofactor.

Its subcellular location is the cytoplasm. The enzyme catalyses L-aspartate(89)-[ribosomal protein uS12]-hydrogen + (sulfur carrier)-SH + AH2 + 2 S-adenosyl-L-methionine = 3-methylsulfanyl-L-aspartate(89)-[ribosomal protein uS12]-hydrogen + (sulfur carrier)-H + 5'-deoxyadenosine + L-methionine + A + S-adenosyl-L-homocysteine + 2 H(+). Functionally, catalyzes the methylthiolation of an aspartic acid residue of ribosomal protein uS12. This Verminephrobacter eiseniae (strain EF01-2) protein is Ribosomal protein uS12 methylthiotransferase RimO.